Here is a 229-residue protein sequence, read N- to C-terminus: Sugar fermentation stimulation protein homolog (229 aa).

It belongs to the SfsA family.

The sequence is that of Sugar fermentation stimulation protein homolog from Carboxydothermus hydrogenoformans (strain ATCC BAA-161 / DSM 6008 / Z-2901).